The chain runs to 329 residues: uncharacterized protein (329 aa).

Positions 37–180 (LAEKILGHSG…AMLLFHSRGV (144 aa)) constitute an SIS domain. 52–57 (GVGKSG) provides a ligand contact to ATP. 2 CBS domains span residues 206-265 (MFPK…GGEV) and 274-329 (MTAN…AGLL).

It belongs to the SIS family. GutQ/KpsF subfamily.

This is an uncharacterized protein from Chlamydia pneumoniae (Chlamydophila pneumoniae).